The following is a 404-amino-acid chain: Indole-3-acetate O-methyltransferase 1 (404 aa).

Residues 82 to 83 (GC), Asn-88, Asp-120, 169 to 171 (TFY), and 186 to 188 (TFS) contribute to the S-adenosyl-L-methionine site. Asn-208, Val-212, Arg-294, Asp-295, Phe-297, and Asn-298 together coordinate Mg(2+).

Belongs to the methyltransferase superfamily. SABATH family. In terms of assembly, homodimer. The cofactor is Mg(2+). As to expression, expressed in roots and panicles.

It carries out the reaction (indol-3-yl)acetate + S-adenosyl-L-methionine = methyl (indol-3-yl)acetate + S-adenosyl-L-homocysteine. Its function is as follows. Catalyzes the methylation of the free carboxyl end of the plant hormone indole-3-acetic acid (IAA). Converts IAA to IAA methyl ester (MeIAA). Regulates IAA activities by IAA methylation. Methylation of IAA plays an important role in regulating plant development and auxin homeostasis. MeIAA seems to be an inactive form of IAA. The chain is Indole-3-acetate O-methyltransferase 1 (IAMT1) from Oryza sativa subsp. japonica (Rice).